Here is a 261-residue protein sequence, read N- to C-terminus: Ribonuclease HII (261 aa).

An RNase H type-2 domain is found at 71–259 (KYIAGVDEVG…VKESKLHFDS (189 aa)). Residues Asp77, Glu78, and Asp169 each contribute to the a divalent metal cation site.

The protein belongs to the RNase HII family. The cofactor is Mn(2+). Mg(2+) is required as a cofactor.

It localises to the cytoplasm. It carries out the reaction Endonucleolytic cleavage to 5'-phosphomonoester.. Functionally, endonuclease that specifically degrades the RNA of RNA-DNA hybrids. In Listeria monocytogenes serovar 1/2a (strain ATCC BAA-679 / EGD-e), this protein is Ribonuclease HII.